Here is a 225-residue protein sequence, read N- to C-terminus: Ribosome maturation factor RimM (225 aa).

Residues 144–225 (ADEFYWVDLI…RIVVDWEADY (82 aa)) enclose the PRC barrel domain.

Belongs to the RimM family. Binds ribosomal protein uS19.

It is found in the cytoplasm. Functionally, an accessory protein needed during the final step in the assembly of 30S ribosomal subunit, possibly for assembly of the head region. Essential for efficient processing of 16S rRNA. May be needed both before and after RbfA during the maturation of 16S rRNA. It has affinity for free ribosomal 30S subunits but not for 70S ribosomes. The polypeptide is Ribosome maturation factor RimM (Burkholderia orbicola (strain MC0-3)).